The following is a 251-amino-acid chain: Cell division protein ZapD (251 aa).

This sequence belongs to the ZapD family. In terms of assembly, interacts with FtsZ.

The protein resides in the cytoplasm. Its function is as follows. Cell division factor that enhances FtsZ-ring assembly. Directly interacts with FtsZ and promotes bundling of FtsZ protofilaments, with a reduction in FtsZ GTPase activity. This chain is Cell division protein ZapD, found in Janthinobacterium sp. (strain Marseille) (Minibacterium massiliensis).